The chain runs to 640 residues: Threonine--tRNA ligase (640 aa).

Residues 1 to 60 (MKITFPDGAVKEFEPGVSTADIAASISPGLKKKALAGKLNGELLDLVTPIHEDGAIEIVT) enclose the TGS domain. Residues 241-538 (DHRKLGKELE…LIEEYKGAFP (298 aa)) are catalytic. Positions 334, 385, and 515 each coordinate Zn(2+).

Belongs to the class-II aminoacyl-tRNA synthetase family. As to quaternary structure, homodimer. It depends on Zn(2+) as a cofactor.

It is found in the cytoplasm. It carries out the reaction tRNA(Thr) + L-threonine + ATP = L-threonyl-tRNA(Thr) + AMP + diphosphate + H(+). Its function is as follows. Catalyzes the attachment of threonine to tRNA(Thr) in a two-step reaction: L-threonine is first activated by ATP to form Thr-AMP and then transferred to the acceptor end of tRNA(Thr). Also edits incorrectly charged L-seryl-tRNA(Thr). The polypeptide is Threonine--tRNA ligase (Listeria monocytogenes serovar 1/2a (strain ATCC BAA-679 / EGD-e)).